Consider the following 100-residue polypeptide: Transcription elongation factor A protein-like 7 (100 aa).

Residues 1–32 (MQKPCKENEGKPKCSVPKREEKRPYGEFERQQ) are compositionally biased toward basic and acidic residues. A disordered region spans residues 1–34 (MQKPCKENEGKPKCSVPKREEKRPYGEFERQQTE). A coiled-coil region spans residues 60–88 (EEMTREGDEMERCLEEIRGLRKKFRALHS).

Belongs to the TFS-II family. TFA subfamily. Highly expressed in normal and fetal brain tissues, and weakly expressed in uterus and ovary. Down-regulated in epithelial ovarian, cervical, prostate, breast, brain and lung cancer cell lines and in brain and ovarian tumors.

It is found in the nucleus. Plays a role in the negative regulation of NF-kappa-B signaling at the basal level by modulating transcriptional activity of NF-kappa-B on its target gene promoters. Associates with cyclin D1 promoter containing Myc E-box sequence and transcriptionally represses cyclin D1 expression. Regulates telomerase reverse transcriptase expression and telomerase activity in both ALT (alternative lengthening of telomeres)and telomerase-positive cell lines. The sequence is that of Transcription elongation factor A protein-like 7 (TCEAL7) from Homo sapiens (Human).